The primary structure comprises 1199 residues: Pyruvate-flavodoxin oxidoreductase (1199 aa).

2 4Fe-4S ferredoxin-type domains span residues 699–728 (EIPVWDTDICVQCSKCVMVCPHAAIRAKVY) and 755–784 (FTIQVAPEDCTGCAICVNVCPAKNKSEPSL). [4Fe-4S] cluster-binding residues include Cys-708, Cys-711, Cys-714, Cys-718, Cys-764, Cys-767, Cys-770, Cys-774, Cys-838, Cys-841, Cys-866, and Cys-1103.

This sequence belongs to the pyruvate:ferredoxin/flavodoxin oxidoreductase family. It depends on [4Fe-4S] cluster as a cofactor.

It carries out the reaction oxidized [flavodoxin] + pyruvate + CoA + 2 H(+) = reduced [flavodoxin] + acetyl-CoA + CO2. In terms of biological role, oxidoreductase required for the transfer of electrons from pyruvate to flavodoxin, which reduces nitrogenase. The chain is Pyruvate-flavodoxin oxidoreductase (nifJ) from Nostoc sp. (strain PCC 7120 / SAG 25.82 / UTEX 2576).